The following is a 245-amino-acid chain: Proteolipid protein DM alpha (245 aa).

The next 4 helical transmembrane spans lie at 19 to 35 (LIAT…FCGC), 71 to 87 (IIYG…VLLL), 117 to 133 (FIFL…GVFA), and 204 to 220 (LFIA…IALL).

Belongs to the myelin proteolipid protein family. Highly expressed in white matter in myelinating shark brain.

Its subcellular location is the membrane. The protein is Proteolipid protein DM alpha of Squalus acanthias (Spiny dogfish).